We begin with the raw amino-acid sequence, 375 residues long: Cyclic AMP receptor 2 (375 aa).

Topologically, residues 1-10 are extracellular; sequence MTIMSDIIAQ. The chain crosses the membrane as a helical span at residues 11-30; it reads RTILLIADFSSIIGCSLVLI. Over 31 to 44 the chain is Cytoplasmic; sequence GFWRLKLLRNHITK. The helical transmembrane segment at 45–65 threads the bilayer; that stretch reads IISLFCATSLFKDVISTIITL. Topologically, residues 66–82 are extracellular; the sequence is LYKPDQTESGFPCYLHA. The helical transmembrane segment at 83–108 threads the bilayer; the sequence is IVITFGSLACWLWTLMLSFSIYNLIV. Over 109–119 the chain is Cytoplasmic; that stretch reads RREPEPERFEK. The helical transmembrane segment at 120-138 threads the bilayer; that stretch reads FYFCLCYGLPLISTIVMLS. Residues 139–161 lie on the Extracellular side of the membrane; it reads THIIQPVGGWCWIGDNYDGYRFG. Residues 162–180 traverse the membrane as a helical segment; sequence LFYGPFFFIWGTSAILVGL. The Cytoplasmic segment spans residues 181–204; that stretch reads TSKYTYSVIRSSVSDNKDKHMTYQ. Position 192 is a phosphoserine (Ser192). Residues 205–223 traverse the membrane as a helical segment; the sequence is FKLINYIVVFLVCWVFAIV. At 224-234 the chain is on the extracellular side; it reads NRILNGLNQFP. A helical transmembrane segment spans residues 235-259; it reads TVPNVLHTYFSVSHGFYASITFIYN. Residues 260-375 are Cytoplasmic-facing; the sequence is NPLMWRYFGA…NNINNKNDMI (116 aa). 2 positions are modified to phosphoserine: Ser298 and Ser303. Residues 338–375 are disordered; sequence PKENENQNHHHHHHHHHHHNHYNNNNNNNNINNKNDMI. Positions 346–358 are enriched in basic residues; sequence HHHHHHHHHHHNH. A compositionally biased stretch (low complexity) spans 359–375; that stretch reads YNNNNNNNNINNKNDMI.

Belongs to the G-protein coupled receptor 5 family. C-terminal Ser or Thr residues may be phosphorylated.

It localises to the membrane. Its function is as follows. Receptor for cAMP. Coordinates the aggregation of individual cells into a multicellular organism and regulates the expression of a large number of developmentally regulated genes. The activity of this receptor is mediated by G proteins. Plays a key role during tip formation and late development; involved in cAMP-directed patterning of pre stalk cells as they sort before and during tip formation. The chain is Cyclic AMP receptor 2 (carB) from Dictyostelium discoideum (Social amoeba).